A 433-amino-acid chain; its full sequence is GTPase Obg (433 aa).

One can recognise an Obg domain in the interval 4-162 (EDFVDRVTIF…RWLELELKLL (159 aa)). Residues 163–334 (ADAGLIGFPN…LKQKIFEIVG (172 aa)) enclose the OBG-type G domain. Residues 169–176 (GFPNVGKS), 194–198 (FTTLV), 216–219 (DIPG), 286–289 (NKID), and 315–317 (SAL) contribute to the GTP site. Residues S176 and T196 each coordinate Mg(2+). Positions 356–433 (TKIEERFDFE…IGQYSFEYKE (78 aa)) constitute an OCT domain.

The protein belongs to the TRAFAC class OBG-HflX-like GTPase superfamily. OBG GTPase family. In terms of assembly, monomer. Mg(2+) serves as cofactor.

The protein localises to the cytoplasm. Its function is as follows. An essential GTPase which binds GTP, GDP and possibly (p)ppGpp with moderate affinity, with high nucleotide exchange rates and a fairly low GTP hydrolysis rate. Plays a role in control of the cell cycle, stress response, ribosome biogenesis and in those bacteria that undergo differentiation, in morphogenesis control. The chain is GTPase Obg from Pseudothermotoga lettingae (strain ATCC BAA-301 / DSM 14385 / NBRC 107922 / TMO) (Thermotoga lettingae).